The primary structure comprises 412 residues: Phosphatidylinositol 3,4,5-trisphosphate 3-phosphatase and protein-tyrosine-phosphatase PTEN1 (412 aa).

In terms of domain architecture, Phosphatase tensin-type spans 42 to 211; it reads RRLIIGGYDL…KYWSDLLSFS (170 aa). Cys152 functions as the Phosphocysteine intermediate in the catalytic mechanism. One can recognise a C2 tensin-type domain in the interval 239-396; that stretch reads VDSVFFVVSE…FSLELLFGPA (158 aa).

The protein belongs to the PTEN phosphatase protein family. As to expression, expressed exclusively in pollen grains during the late stage of development (at protein level).

The enzyme catalyses O-phospho-L-tyrosyl-[protein] + H2O = L-tyrosyl-[protein] + phosphate. It carries out the reaction a 1,2-diacyl-sn-glycero-3-phospho-(1D-myo-inositol-3,4,5-trisphosphate) + H2O = a 1,2-diacyl-sn-glycero-3-phospho-(1D-myo-inositol-4,5-bisphosphate) + phosphate. Its activity is regulated as follows. Inhibited by vanadate. Protein tyrosine phosphatase that also exhibits lipid phosphatase activity. Can use phosphatidylinositol substrates such as PtdIns(3,4,5)P(3) as substrate. Pollen-specific phosphatase required for pollen development. This Arabidopsis thaliana (Mouse-ear cress) protein is Phosphatidylinositol 3,4,5-trisphosphate 3-phosphatase and protein-tyrosine-phosphatase PTEN1.